We begin with the raw amino-acid sequence, 535 residues long: MRLAFWLYEGTALHGISRITNSMKGVHTVYHAPQGDDYITATYSMLERTPDFPGLSISVVRGRDLAQGVSRLPGTLQQVAHHYSPDLTVIAPSCSTALLQEDLHQLAAHSGVPEEKLLVYALNPFRVSENEAADGLFFELVKRFAVAQEKTPRPSVNLLGFTSLGFHLRANLTSLRRMLQTLGVSVNVVAPWGAGIEDLRKLPAAWLNIAPYREIGETAAGYLGETFGMPAIHEAPIGVEPTLAWLRSVIEKINAVGVEQGVPPIGMPKLNAFSLDGMSAPSGVPWFARTADMESFSNKRAFVFGDATHTVSIVKFLRDELGMKIIGAGTYMHRHADFVRRELEGYLSGELLVTDKFQDVSKVIEDEMPDLVCGTQMERHSCRKLDVPCMVICPPTHIENHLLGYYPFFGFDGADVIADRVYLSCKLGLEKHLIDFFGDAGLEYEDEASPSESAPHASNGHEDVAGGSTAQSVPSHAATEGDGMSWTDEAENMLKKVPFFVRKKVRKNTENFAREQGETTVTADVFRQAKESLGG.

Residue Asp-36 participates in [4Fe-4S] cluster binding. Asp-292 functions as the Proton donor in the catalytic mechanism. 428 to 429 (GL) contributes to the substrate binding site. A disordered region spans residues 446–483 (DEASPSESAPHASNGHEDVAGGSTAQSVPSHAATEGDG).

It belongs to the ChlB/BchB/BchZ family. Protochlorophyllide reductase is composed of three subunits; BchL, BchN and BchB. Forms a heterotetramer of two BchB and two BchN subunits. [4Fe-4S] cluster serves as cofactor.

It catalyses the reaction chlorophyllide a + oxidized 2[4Fe-4S]-[ferredoxin] + 2 ADP + 2 phosphate = protochlorophyllide a + reduced 2[4Fe-4S]-[ferredoxin] + 2 ATP + 2 H2O. It participates in porphyrin-containing compound metabolism; bacteriochlorophyll biosynthesis (light-independent). In terms of biological role, component of the dark-operative protochlorophyllide reductase (DPOR) that uses Mg-ATP and reduced ferredoxin to reduce ring D of protochlorophyllide (Pchlide) to form chlorophyllide a (Chlide). This reaction is light-independent. The NB-protein (BchN-BchB) is the catalytic component of the complex. The chain is Light-independent protochlorophyllide reductase subunit B from Chlorobium limicola (strain DSM 245 / NBRC 103803 / 6330).